The chain runs to 124 residues: Small ribosomal subunit protein uS10z/uS10x (124 aa).

This sequence belongs to the universal ribosomal protein uS10 family.

This chain is Small ribosomal subunit protein uS10z/uS10x (RPS20A), found in Arabidopsis thaliana (Mouse-ear cress).